Here is a 143-residue protein sequence, read N- to C-terminus: Transcriptional regulator MraZ (143 aa).

SpoVT-AbrB domains are found at residues 5-47 (EYQH…PMSE) and 76-119 (ATEC…SKEI).

It belongs to the MraZ family. In terms of assembly, forms oligomers.

It localises to the cytoplasm. The protein resides in the nucleoid. This chain is Transcriptional regulator MraZ, found in Bacillus licheniformis (strain ATCC 14580 / DSM 13 / JCM 2505 / CCUG 7422 / NBRC 12200 / NCIMB 9375 / NCTC 10341 / NRRL NRS-1264 / Gibson 46).